Consider the following 753-residue polypeptide: Catalase-peroxidase (753 aa).

Residues 91–243 constitute a cross-link (tryptophyl-tyrosyl-methioninium (Trp-Tyr) (with M-269)); that stretch reads WHSAGTYRIG…LGAVQMGLIY (153 aa). Catalysis depends on H92, which acts as the Proton acceptor. A cross-link (tryptophyl-tyrosyl-methioninium (Tyr-Met) (with W-91)) is located at residues 243–269; it reads YVNPEGPDGNPDPLAAAHDIRETFARM. A heme b-binding site is contributed by H284.

It belongs to the peroxidase family. Peroxidase/catalase subfamily. Homodimer or homotetramer. Heme b is required as a cofactor. Formation of the three residue Trp-Tyr-Met cross-link is important for the catalase, but not the peroxidase activity of the enzyme.

It carries out the reaction H2O2 + AH2 = A + 2 H2O. It catalyses the reaction 2 H2O2 = O2 + 2 H2O. Bifunctional enzyme with both catalase and broad-spectrum peroxidase activity. The sequence is that of Catalase-peroxidase from Paraburkholderia xenovorans (strain LB400).